The primary structure comprises 87 residues: Small ribosomal subunit protein bS20 (87 aa).

Positions 1 to 22 (MANSAQARKRARQSVKQRAHNA) are disordered. Positions 7-19 (ARKRARQSVKQRA) are enriched in basic residues.

It belongs to the bacterial ribosomal protein bS20 family.

In terms of biological role, binds directly to 16S ribosomal RNA. This chain is Small ribosomal subunit protein bS20, found in Neisseria gonorrhoeae (strain ATCC 700825 / FA 1090).